The chain runs to 290 residues: Bifunctional protein FolD (290 aa).

Residues 167 to 169 (GRS), serine 192, and isoleucine 233 each bind NADP(+).

This sequence belongs to the tetrahydrofolate dehydrogenase/cyclohydrolase family. Homodimer.

It catalyses the reaction (6R)-5,10-methylene-5,6,7,8-tetrahydrofolate + NADP(+) = (6R)-5,10-methenyltetrahydrofolate + NADPH. The catalysed reaction is (6R)-5,10-methenyltetrahydrofolate + H2O = (6R)-10-formyltetrahydrofolate + H(+). The protein operates within one-carbon metabolism; tetrahydrofolate interconversion. Catalyzes the oxidation of 5,10-methylenetetrahydrofolate to 5,10-methenyltetrahydrofolate and then the hydrolysis of 5,10-methenyltetrahydrofolate to 10-formyltetrahydrofolate. The sequence is that of Bifunctional protein FolD from Gloeobacter violaceus (strain ATCC 29082 / PCC 7421).